Here is a 361-residue protein sequence, read N- to C-terminus: tRNA/tmRNA (uracil-C(5))-methyltransferase (361 aa).

5 residues coordinate S-adenosyl-L-methionine: Gln185, Tyr213, Asn218, Glu234, and Asp294. Cys319 functions as the Nucleophile in the catalytic mechanism. The active-site Proton acceptor is the Glu353.

Belongs to the class I-like SAM-binding methyltransferase superfamily. RNA M5U methyltransferase family. TrmA subfamily.

It carries out the reaction uridine(54) in tRNA + S-adenosyl-L-methionine = 5-methyluridine(54) in tRNA + S-adenosyl-L-homocysteine + H(+). It catalyses the reaction uridine(341) in tmRNA + S-adenosyl-L-methionine = 5-methyluridine(341) in tmRNA + S-adenosyl-L-homocysteine + H(+). In terms of biological role, dual-specificity methyltransferase that catalyzes the formation of 5-methyluridine at position 54 (m5U54) in all tRNAs, and that of position 341 (m5U341) in tmRNA (transfer-mRNA). The sequence is that of tRNA/tmRNA (uracil-C(5))-methyltransferase from Pseudomonas syringae pv. syringae (strain B728a).